Consider the following 344-residue polypeptide: NADH-quinone oxidoreductase subunit H 2 (344 aa).

8 helical membrane-spanning segments follow: residues 13–33, 82–102, 116–136, 161–181, 188–208, 240–260, 280–300, and 319–339; these read LPIL…VAWL, ILFL…WAVI, ALLY…LAGW, MGFA…GEIV, FWHW…ISGV, LFFL…ALMF, VPGI…YLWF, and VFIP…VAQL.

Belongs to the complex I subunit 1 family. In terms of assembly, NDH-1 is composed of 14 different subunits. Subunits NuoA, H, J, K, L, M, N constitute the membrane sector of the complex.

The protein localises to the cell inner membrane. The enzyme catalyses a quinone + NADH + 5 H(+)(in) = a quinol + NAD(+) + 4 H(+)(out). Its function is as follows. NDH-1 shuttles electrons from NADH, via FMN and iron-sulfur (Fe-S) centers, to quinones in the respiratory chain. The immediate electron acceptor for the enzyme in this species is believed to be ubiquinone. Couples the redox reaction to proton translocation (for every two electrons transferred, four hydrogen ions are translocated across the cytoplasmic membrane), and thus conserves the redox energy in a proton gradient. This subunit may bind ubiquinone. This is NADH-quinone oxidoreductase subunit H 2 from Nitrosococcus oceani (strain ATCC 19707 / BCRC 17464 / JCM 30415 / NCIMB 11848 / C-107).